Reading from the N-terminus, the 548-residue chain is Probable manganese-dependent inorganic pyrophosphatase (548 aa).

The interval 1-74 (MKALERVYVI…HIETLEPTVE (74 aa)) is PPase part 1. 3 residues coordinate Mn(2+): H12, D16, and D18. 2 CBS domains span residues 77–132 (ELKN…RLKI) and 254–311 (MSKK…VILV). The interval 306 to 548 (KKVILVDHNE…KIGEVLRRER (243 aa)) is PPase part 2. Residues D312, H334, and D386 each coordinate Mn(2+).

The protein belongs to the PPase class C family. Mn(2+) is required as a cofactor.

The protein localises to the cytoplasm. It carries out the reaction diphosphate + H2O = 2 phosphate + H(+). This chain is Probable manganese-dependent inorganic pyrophosphatase (ppaC), found in Thermotoga maritima (strain ATCC 43589 / DSM 3109 / JCM 10099 / NBRC 100826 / MSB8).